A 279-amino-acid polypeptide reads, in one-letter code: MSALEWYAHKSLGDGIFWIQERFYESGNRANIWLVRGSEQDVVIDTGLGLRSLPEYLYSSGLLQDREAKEDAARRPLLAVATHVHFDHSGGLYQFDRVAVHHAEAEALARGDNFETVTWLSDSEVVRTPSPGWRARQFRVQAVQPTLILQDGDVINLGDRQLTVMHMPGHSRGSICLHDKDRKILFSGDVVYDGSLIDWLPYSRISDYVGTCERLIELVDRGLVEKVLPGHFNTFGAERLFRLASNYISKAGICHKVSTFAMRSLASLALRVTNSRTSP.

N-acetylserine is present on Ser2. Residues His83, His85, Asp87, His88, His170, Asp189, and His231 each coordinate Zn(2+). Residue Cys254 is the site of S-palmitoyl cysteine attachment.

It belongs to the metallo-beta-lactamase superfamily. Glyoxalase II family. Zn(2+) serves as cofactor. Palmitoylated on Cys-254 by ZDHHC20.

It is found in the endoplasmic reticulum membrane. The protein resides in the cell membrane. It catalyses the reaction hexadecanoyl-CoA + H2O = hexadecanoate + CoA + H(+). The catalysed reaction is dodecanoyl-CoA + H2O = dodecanoate + CoA + H(+). The enzyme catalyses tetradecanoyl-CoA + H2O = tetradecanoate + CoA + H(+). It carries out the reaction octadecanoyl-CoA + H2O = octadecanoate + CoA + H(+). It catalyses the reaction a beta-lactam + H2O = a substituted beta-amino acid. Beta-lactamase activity is inhibited by sulbactam. Functionally, acyl-CoA thioesterases are a group of enzymes that catalyze the hydrolysis of acyl-CoAs to the free fatty acid and coenzyme A (CoASH), providing the potential to regulate intracellular levels of acyl-CoAs, free fatty acids and CoASH. Has an acyl-CoA thioesterase activity towards the long chain fatty acyl-CoA thioester palmitoyl-CoA (hexadecanoyl-CoA; C16:0-CoA). Displays a substrate preference for fatty acyl-CoAs with chain-lengths C12-C18. Possesses beta-lactamase activity, catalyzing the hydrolysis of penicillin G and nitrocefin. Exhibits no activity towards other beta-lactam antibiotic classes including cephalosporins (cefotaxime) and carbapenems (imipenem). This Homo sapiens (Human) protein is Acyl-coenzyme A thioesterase MBLAC2 (MBLAC2).